Consider the following 100-residue polypeptide: Urease subunit gamma (100 aa).

Belongs to the urease gamma subunit family. Heterotrimer of UreA (gamma), UreB (beta) and UreC (alpha) subunits. Three heterotrimers associate to form the active enzyme.

It localises to the cytoplasm. It carries out the reaction urea + 2 H2O + H(+) = hydrogencarbonate + 2 NH4(+). It participates in nitrogen metabolism; urea degradation; CO(2) and NH(3) from urea (urease route): step 1/1. This Mycolicibacterium vanbaalenii (strain DSM 7251 / JCM 13017 / BCRC 16820 / KCTC 9966 / NRRL B-24157 / PYR-1) (Mycobacterium vanbaalenii) protein is Urease subunit gamma.